The chain runs to 456 residues: CBL-interacting protein kinase 9 (456 aa).

The Protein kinase domain maps to Tyr-27 to Phe-282. ATP-binding positions include Ile-33–Val-41 and Lys-56. Asp-150 (proton acceptor) is an active-site residue. The activation loop stretch occupies residues Asp-168–Glu-197. The NAF domain maps to Arg-318–Glu-343. The interval Lys-351 to Val-380 is PPI.

This sequence belongs to the protein kinase superfamily. CAMK Ser/Thr protein kinase family. SNF1 subfamily. Mn(2+) is required as a cofactor.

The enzyme catalyses L-seryl-[protein] + ATP = O-phospho-L-seryl-[protein] + ADP + H(+). It carries out the reaction L-threonyl-[protein] + ATP = O-phospho-L-threonyl-[protein] + ADP + H(+). Functionally, CIPK serine-threonine protein kinases interact with CBL proteins. Binding of a CBL protein to the regulatory NAF domain of CIPK protein lead to the activation of the kinase in a calcium-dependent manner. This chain is CBL-interacting protein kinase 9 (CIPK9), found in Oryza sativa subsp. japonica (Rice).